The sequence spans 228 residues: Nucleolar protein 12 (228 aa).

Residues 1-22 are disordered; the sequence is MGKSDRLQQGSKGKGGGKRKHG. Residues 40 to 103 are a coiled coil; sequence FHKRKLERRR…AITATTECVQ (64 aa). The span at 126–145 shows a compositional bias: basic and acidic residues; sequence LLEPAQRDGGDGEERERTEA. Positions 126–228 are disordered; that stretch reads LLEPAQRDGG…QTGRNERSQD (103 aa). Residues 158-170 show a composition bias toward polar residues; sequence KIQSLTASLNSLV. Positions 171 to 180 are enriched in basic residues; that stretch reads KQKKRRKQKR. Positions 181 to 195 are enriched in basic and acidic residues; that stretch reads RQEAKQRSHQSDRKS. Over residues 204–220 the composition is skewed to basic residues; it reads NKQKQGKSTKRQRRRQT.

The protein belongs to the RRP17 family.

It localises to the nucleus. Its subcellular location is the nucleolus. In terms of biological role, may bind to rRNA. The sequence is that of Nucleolar protein 12 (nol12) from Danio rerio (Zebrafish).